Reading from the N-terminus, the 591-residue chain is Speriolin (591 aa).

The stretch at 1-42 (MSLLTNYEGLRHQIERLVRENEELKKLVRLIRENHELKSAIK) forms a coiled coil. The tract at residues 1 to 78 (MSLLTNYEGL…NNGVFLPPSP (78 aa)) is necessary for targeting centrosomes. A compositionally biased stretch (polar residues) spans 302–314 (NTSDTQAQPSAAQ). Disordered regions lie at residues 302-331 (NTSD…TSPT) and 346-435 (ATSY…ENPR). The span at 317–331 (VVPASVPTSPTTSPT) shows a compositional bias: low complexity. Composition is skewed to polar residues over residues 346–357 (ATSYTPSSTTHI) and 390–401 (PRTSSSPASVND).

It belongs to the speriolin family. In terms of assembly, found in a complex with CDC20, CDC27 and TUBG1. Interacts with CDC20. Detected only in testis.

It localises to the cytoplasm. The protein resides in the cytoskeleton. The protein localises to the microtubule organizing center. It is found in the centrosome. The chain is Speriolin (SPATC1) from Homo sapiens (Human).